The chain runs to 550 residues: Phosphatidylinositol 4-kinase gamma 2 (550 aa).

Ubiquitin-like domains lie at 34–111 and 112–190; these read SVLV…YDPL and LVTV…VEDT. A disordered region spans residues 228–247; sequence VDGLNKGSPPVRSAEGTGGT. A PI3K/PI4K catalytic domain is found at 234–532; that stretch reads GSPPVRSAEG…SVLPASSEAT (299 aa). Residues 240-246 form a G-loop region; sequence SAEGTGG. ATP-binding positions include 241 to 247, K263, and 359 to 362; these read AEGTGGT and QMFM. Positions 392–400 are catalytic loop; the sequence is ANADRHAGN. The interval 415–441 is activation loop; it reads PIDHGYCLPENFEDCTFEWLYWPQAKL. Position 417 (D417) interacts with ATP.

This sequence belongs to the PI3/PI4-kinase family. Type II PI4K subfamily.

The protein resides in the membrane. It carries out the reaction a 1,2-diacyl-sn-glycero-3-phospho-(1D-myo-inositol) + ATP = a 1,2-diacyl-sn-glycero-3-phospho-(1D-myo-inositol 4-phosphate) + ADP + H(+). In terms of biological role, the phosphorylation of phosphatidylinositol (PI) to PI4P is the first committed step in the generation of phosphatidylinositol 4,5-bisphosphate (PIP2), a precursor of the second messenger inositol 1,4,5-trisphosphate (InsP3). The sequence is that of Phosphatidylinositol 4-kinase gamma 2 (PI4KG2) from Arabidopsis thaliana (Mouse-ear cress).